Here is a 207-residue protein sequence, read N- to C-terminus: Ribosomal RNA small subunit methyltransferase G (207 aa).

S-adenosyl-L-methionine-binding positions include Gly-73, Leu-78, 124–125 (VE), and Arg-139.

It belongs to the methyltransferase superfamily. RNA methyltransferase RsmG family.

It localises to the cytoplasm. It carries out the reaction guanosine(527) in 16S rRNA + S-adenosyl-L-methionine = N(7)-methylguanosine(527) in 16S rRNA + S-adenosyl-L-homocysteine. Specifically methylates the N7 position of guanine in position 527 of 16S rRNA. This chain is Ribosomal RNA small subunit methyltransferase G, found in Klebsiella pneumoniae subsp. pneumoniae (strain ATCC 700721 / MGH 78578).